Reading from the N-terminus, the 675-residue chain is Glycerophosphocholine phosphodiesterase GPCPD1 (675 aa).

Residues 1-115 (MTPSQVTFEI…IIIDDGQFGI (115 aa)) enclose the CBM20 domain. Substrate is bound by residues Arg-70 and 88–89 (HK). Ser-178 and Ser-427 each carry phosphoserine. The region spanning 321–621 (PLDVGHRGAG…DRIYDWMPEQ (301 aa)) is the GP-PDE domain. Residue Tyr-611 is modified to Phosphotyrosine.

It belongs to the glycerophosphoryl diester phosphodiesterase family. In terms of tissue distribution, widely expressed with highest levels in skeletal muscle and heart.

It localises to the cytoplasm. It is found in the cytosol. It carries out the reaction sn-glycerol 3-phosphocholine + H2O = sn-glycerol 3-phosphate + choline + H(+). Functionally, may be involved in the negative regulation of skeletal muscle differentiation, independently of its glycerophosphocholine phosphodiesterase activity. In Mus musculus (Mouse), this protein is Glycerophosphocholine phosphodiesterase GPCPD1 (Gpcpd1).